A 261-amino-acid polypeptide reads, in one-letter code: tRNA pseudouridine synthase A (261 aa).

D51 serves as the catalytic Nucleophile. Y109 serves as a coordination point for substrate.

This sequence belongs to the tRNA pseudouridine synthase TruA family. Homodimer.

The catalysed reaction is uridine(38/39/40) in tRNA = pseudouridine(38/39/40) in tRNA. Functionally, formation of pseudouridine at positions 38, 39 and 40 in the anticodon stem and loop of transfer RNAs. This is tRNA pseudouridine synthase A from Shewanella frigidimarina (strain NCIMB 400).